The primary structure comprises 557 residues: NAC domain-containing protein 17 (557 aa).

One can recognise an NAC domain in the interval 16–166; the sequence is SAPGFRFHPT…YYALYKLFKK (151 aa). The DNA-binding element occupies 115-172; that stretch reads VGLKKTLVFYRGRAPSGERTDWVMHEYTMDEDELGRCKNPQEYYALYKLFKKSGAGPK. The chain crosses the membrane as a helical span at residues 526–546; that stretch reads FLLLSIVGALCAIFWVLVATV.

Expressed in roots, rosette leaves, cauline leaves, shoot apex, stems and flowers.

Its subcellular location is the endoplasmic reticulum membrane. The protein localises to the nucleus. In terms of biological role, transcriptional activator activated by proteolytic cleavage through regulated intramembrane proteolysis (RIP). Transcriptional activator that acts as a positive regulator of AOX1A during mitochondrial dysfunction. Binds directly to AOX1A promoter. Mediates mitochondrial retrograde signaling. In Arabidopsis thaliana (Mouse-ear cress), this protein is NAC domain-containing protein 17.